A 113-amino-acid polypeptide reads, in one-letter code: Carboxysome shell protein CcmK4 (113 aa).

The BMC domain maps to 5-91; sequence AIGSLETKGF…PHENVEAVFP (87 aa).

Belongs to the bacterial microcompartments protein family. CcmK subfamily. As to quaternary structure, homohexamer. Interacts stably with CcmK3, probably forms heterohexamers with a 1:2 CcmK3:CcmK4 stoichiometry.

The protein resides in the carboxysome. Its function is as follows. One of the shell proteins of the carboxysome, a polyhedral inclusion where RuBisCO (ribulose bisphosphate carboxylase, rbcL-rbcS) is sequestered. Assembles into hexamers which make sheets that form the facets of the polyhedral carboxysome. The hexamer central pore probably regulates metabolite flux. Functionally, a minor shell protein of the carboxysome, a polyhedral inclusion where RuBisCO (ribulose bisphosphate carboxylase, rbcL-rbcS) is sequestered. Hexamers form sheets that form the facets of the polyhedral carboxysome. The shell is 4.5 nm thick, as observed for CcmK proteins. In PCC 7942 there are several CcmK paralogs with presumably functional differences; replacing the central pore residues (34-37) with those of CcmK2 from this organism (Tyr-Glu-Lys-Ile) allows the bacterium to make carboxysomes, but the expression level is too low to know if the carboxysome is functional for CO(2) fixation. This subunit probably makes both homohexamers and heterohexamers with CcmK3. The CcmK3-CcmK4 heterohexmers have been suggested to cap other hexamers, perhaps to alter metabolite flux. In Synechococcus elongatus (strain ATCC 33912 / PCC 7942 / FACHB-805) (Anacystis nidulans R2), this protein is Carboxysome shell protein CcmK4.